A 353-amino-acid chain; its full sequence is Mitochondrial import inner membrane translocase subunit TIM50 (353 aa).

Residues 1 to 21 (MAASAALFSRLRSGLRVGARG) constitute a mitochondrion transit peptide. Residues 22–65 (LCTRLAPPPPRTPEQVTEIANRGGSKAQGPQHQPGSEGPSYAKK) are Mitochondrial matrix-facing. The segment at 24 to 59 (TRLAPPPPRTPEQVTEIANRGGSKAQGPQHQPGSEG) is disordered. A helical membrane pass occupies residues 66-86 (IALWIAGLLGAGGTVSIVYIF). Topologically, residues 87–353 (GNNPVDENGT…SRLWPRSKQP (267 aa)) are mitochondrial intermembrane. An FCP1 homology domain is found at 143–286 (YYQPPYTLVL…LDLSAFLKTI (144 aa)). The residue at position 341 (S341) is a Phosphoserine.

This sequence belongs to the TIM50 family. Component of the TIM23 complex at least composed of TIMM23, TIMM17 (TIMM17A or TIMM17B) and TIMM50; within this complex, directly interacts with TIMM23. The complex interacts with the TIMM44 component of the PAM complex and with DNAJC15.

The protein localises to the mitochondrion inner membrane. In terms of biological role, essential component of the TIM23 complex, a complex that mediates the translocation of transit peptide-containing proteins across the mitochondrial inner membrane. Has some phosphatase activity in vitro; however such activity may not be relevant in vivo. The protein is Mitochondrial import inner membrane translocase subunit TIM50 (Timm50) of Mus musculus (Mouse).